Here is a 108-residue protein sequence, read N- to C-terminus: Dormancy-associated protein homolog 1 (108 aa).

Positions 28–59 are disordered; it reads DIKGVGEGSSSKTVAAVAGSPGTPTTPGSARK. Ser-47 is modified (phosphoserine). The residue at position 50 (Thr-50) is a Phosphothreonine.

Belongs to the DRM1/ARP family. As to expression, expressed mainly in the low bolt.

The protein is Dormancy-associated protein homolog 1 of Arabidopsis thaliana (Mouse-ear cress).